Here is a 139-residue protein sequence, read N- to C-terminus: MSPFGQQLRELRRARKLTVNQLAVYSGISSATISKIENGKRGTPKPATIKKLAAVLKVPYENLMAAAGHIQAFPEEIREASEGYQSVYEIYQTAVTRGAEHLPIFNSQKWEHLSKQDIENLSKYFDFLSSEAKKRASSS.

The HTH cro/C1-type domain occupies 8–63 (LRELRRARKLTVNQLAVYSGISSATISKIENGKRGTPKPATIKKLAAVLKVPYENL). Positions 19–38 (VNQLAVYSGISSATISKIEN) form a DNA-binding region, H-T-H motif.

This is an uncharacterized protein from Bacillus subtilis (strain 168).